The sequence spans 717 residues: Fatty acid oxidation complex subunit alpha (717 aa).

Residues 1–189 (MIYQSPTIEV…KVGAIDAVVA (189 aa)) form an enoyl-CoA hydratase/isomerase region. Asp296 contacts substrate. Residues 311-717 (KKVNSAAVLG…ANNGSYYQQA (407 aa)) are 3-hydroxyacyl-CoA dehydrogenase. NAD(+)-binding positions include Met324, Asp343, 400-402 (VVE), Lys407, and Ser429. Catalysis depends on His450, which acts as the For 3-hydroxyacyl-CoA dehydrogenase activity. NAD(+) is bound at residue Asn453. 2 residues coordinate substrate: Asn500 and Tyr660.

It in the N-terminal section; belongs to the enoyl-CoA hydratase/isomerase family. The protein in the C-terminal section; belongs to the 3-hydroxyacyl-CoA dehydrogenase family. As to quaternary structure, heterotetramer of two alpha chains (FadB) and two beta chains (FadA).

The enzyme catalyses a (3S)-3-hydroxyacyl-CoA + NAD(+) = a 3-oxoacyl-CoA + NADH + H(+). It catalyses the reaction a (3S)-3-hydroxyacyl-CoA = a (2E)-enoyl-CoA + H2O. The catalysed reaction is a 4-saturated-(3S)-3-hydroxyacyl-CoA = a (3E)-enoyl-CoA + H2O. It carries out the reaction (3S)-3-hydroxybutanoyl-CoA = (3R)-3-hydroxybutanoyl-CoA. The enzyme catalyses a (3Z)-enoyl-CoA = a 4-saturated (2E)-enoyl-CoA. It catalyses the reaction a (3E)-enoyl-CoA = a 4-saturated (2E)-enoyl-CoA. It functions in the pathway lipid metabolism; fatty acid beta-oxidation. In terms of biological role, involved in the aerobic and anaerobic degradation of long-chain fatty acids via beta-oxidation cycle. Catalyzes the formation of 3-oxoacyl-CoA from enoyl-CoA via L-3-hydroxyacyl-CoA. It can also use D-3-hydroxyacyl-CoA and cis-3-enoyl-CoA as substrate. This is Fatty acid oxidation complex subunit alpha from Shewanella pealeana (strain ATCC 700345 / ANG-SQ1).